The following is a 156-amino-acid chain: 1-methylthio-D-xylulose 5-phosphate methylsulfurylase (156 aa).

One can recognise a Cupin type-2 domain in the interval 55–122 (YFEVGPGGHS…ADEALGFLCM (68 aa)). The Mn(2+) site is built by E67, H69, H73, and H107. Residue C121 is part of the active site.

It carries out the reaction S-methyl-1-thio-D-xylulose 5-phosphate + glutathione = S-(methylsulfanyl)glutathione + 1-deoxy-D-xylulose 5-phosphate. The catalysed reaction is S-(methylsulfanyl)glutathione + AH2 = methanethiol + glutathione + A. Its pathway is amino-acid biosynthesis; L-methionine biosynthesis via salvage pathway. The protein operates within metabolic intermediate biosynthesis; 1-deoxy-D-xylulose 5-phosphate biosynthesis. Catalyzes the formation of S-(methylsulfanyl)glutathione and 1-deoxy-D-xylulose 5-phosphate (DXP) from 1-methylthioxylulose 5-phosphate (MTXu-5P). The S-(methylsulfanyl)glutathione is reductively cleaved to relase methanethiol in a second reaction. Involved in the MTA-isoprenoid shunt of the methionine salvage pathway. The polypeptide is 1-methylthio-D-xylulose 5-phosphate methylsulfurylase (Rhodospirillum rubrum (strain ATCC 11170 / ATH 1.1.1 / DSM 467 / LMG 4362 / NCIMB 8255 / S1)).